A 367-amino-acid polypeptide reads, in one-letter code: Glutamate 5-kinase (367 aa).

Lys-9 contributes to the ATP binding site. 3 residues coordinate substrate: Ser-49, Asp-136, and Asn-148. ATP contacts are provided by residues 168 to 169 (TD) and 210 to 216 (TGGMKSK). Residues 276 to 350 (SGQIEIDAGA…GMQSQQIQAR (75 aa)) form the PUA domain.

Belongs to the glutamate 5-kinase family.

It localises to the cytoplasm. It carries out the reaction L-glutamate + ATP = L-glutamyl 5-phosphate + ADP. It participates in amino-acid biosynthesis; L-proline biosynthesis; L-glutamate 5-semialdehyde from L-glutamate: step 1/2. Catalyzes the transfer of a phosphate group to glutamate to form L-glutamate 5-phosphate. The chain is Glutamate 5-kinase from Bacillus anthracis.